A 299-amino-acid polypeptide reads, in one-letter code: Oxygen-dependent coproporphyrinogen-III oxidase (299 aa).

Residue serine 92 participates in substrate binding. Residues histidine 96 and histidine 106 each contribute to the a divalent metal cation site. Histidine 106 (proton donor) is an active-site residue. 108-110 serves as a coordination point for substrate; it reads NVR. A divalent metal cation contacts are provided by histidine 145 and histidine 175. The tract at residues 240-275 is important for dimerization; sequence YVEFNLVWDRGTLFGLQTGGRTESILMSMPPLVRWE. Residue 258–260 participates in substrate binding; sequence GGR.

This sequence belongs to the aerobic coproporphyrinogen-III oxidase family. In terms of assembly, homodimer. A divalent metal cation serves as cofactor.

Its subcellular location is the cytoplasm. It carries out the reaction coproporphyrinogen III + O2 + 2 H(+) = protoporphyrinogen IX + 2 CO2 + 2 H2O. Its pathway is porphyrin-containing compound metabolism; protoporphyrin-IX biosynthesis; protoporphyrinogen-IX from coproporphyrinogen-III (O2 route): step 1/1. Functionally, involved in the heme biosynthesis. Catalyzes the aerobic oxidative decarboxylation of propionate groups of rings A and B of coproporphyrinogen-III to yield the vinyl groups in protoporphyrinogen-IX. This is Oxygen-dependent coproporphyrinogen-III oxidase from Shigella dysenteriae serotype 1 (strain Sd197).